A 374-amino-acid chain; its full sequence is Queuine tRNA-ribosyltransferase (374 aa).

The active-site Proton acceptor is D89. Substrate is bound by residues 89-93 (DSGGF), D143, Q187, and G214. Residues 245-251 (GVGKPED) form an RNA binding region. D264 (nucleophile) is an active-site residue. The tract at residues 269-273 (TRNAR) is RNA binding; important for wobble base 34 recognition. Positions 302, 304, 307, and 333 each coordinate Zn(2+).

It belongs to the queuine tRNA-ribosyltransferase family. In terms of assembly, homodimer. Within each dimer, one monomer is responsible for RNA recognition and catalysis, while the other monomer binds to the replacement base PreQ1. Zn(2+) serves as cofactor.

It catalyses the reaction 7-aminomethyl-7-carbaguanine + guanosine(34) in tRNA = 7-aminomethyl-7-carbaguanosine(34) in tRNA + guanine. It functions in the pathway tRNA modification; tRNA-queuosine biosynthesis. In terms of biological role, catalyzes the base-exchange of a guanine (G) residue with the queuine precursor 7-aminomethyl-7-deazaguanine (PreQ1) at position 34 (anticodon wobble position) in tRNAs with GU(N) anticodons (tRNA-Asp, -Asn, -His and -Tyr). Catalysis occurs through a double-displacement mechanism. The nucleophile active site attacks the C1' of nucleotide 34 to detach the guanine base from the RNA, forming a covalent enzyme-RNA intermediate. The proton acceptor active site deprotonates the incoming PreQ1, allowing a nucleophilic attack on the C1' of the ribose to form the product. After dissociation, two additional enzymatic reactions on the tRNA convert PreQ1 to queuine (Q), resulting in the hypermodified nucleoside queuosine (7-(((4,5-cis-dihydroxy-2-cyclopenten-1-yl)amino)methyl)-7-deazaguanosine). This Yersinia pseudotuberculosis serotype O:1b (strain IP 31758) protein is Queuine tRNA-ribosyltransferase.